A 614-amino-acid chain; its full sequence is FAD-linked oxidoreductase ffsJ (614 aa).

Residues 1–19 form the signal peptide; that stretch reads MRLTRALTPAILALPAAHA. 4 N-linked (GlcNAc...) asparagine glycosylation sites follow: N30, N53, N72, and N114. The FAD-binding PCMH-type domain occupies 119–301; it reads TGSLPAYYID…LSSTHRVEPE (183 aa). N-linked (GlcNAc...) asparagine glycans are attached at residues N314, N329, N461, N465, N478, and N514. Residues 453 to 495 are disordered; sequence NGHGRSNNNNSNNSSTSTSTSTSSKNGSVKPYAYGGKETTSST. Residues 456–480 are compositionally biased toward low complexity; it reads GRSNNNNSNNSSTSTSTSTSSKNGS.

This sequence belongs to the oxygen-dependent FAD-linked oxidoreductase family. The cofactor is FAD.

Its pathway is mycotoxin biosynthesis. Its function is as follows. FAD-linked oxidoreductase; part of the gene cluster that mediates the biosynthesis of the cytotoxic leucine-containing cytochalasans, including aspochalasin C, aspochalasin E, TMC-169, flavichalasine F, aspergillin PZ, aspochalasin M and flavichalasine G. The first step in the pathway is catalyzed by the hybrid PKS-NRPS ffsA that utilizes 8 units of malonyl-CoA to iteratively assemble the octaketide chain before addition of L-leucine by the C-terminal NRPS modules. Because ffsA lacks a designated enoylreductase (ER) domain, the required activity is provided the enoyl reductase fssC. The methyltransferase (MT) domain of ffsA catalyzes the alpha-methylation at C10 and C14 using S-adenosyl-L-methionine as the methyl-donating cosubstrate. Reduction by the hydrolyase ffsE, followed by dehydration and intra-molecular Diels-Alder cyclization by the Diels-Alderase ffsF then yield the required isoindolone-fused macrocycle. A number of oxidative steps catalyzed by the tailoring cytochrome P450 monooxygenase ffsD, the FAD-linked oxidoreductase ffsJ and the short-chain dehydrogenase/reductase ffsI, are further required to afford the final products. The protein is FAD-linked oxidoreductase ffsJ of Aspergillus flavipes.